Consider the following 106-residue polypeptide: 3-oxoacyl-[acyl-carrier-protein] reductase (106 aa).

Belongs to the short-chain dehydrogenases/reductases (SDR) family. As to quaternary structure, homotetramer. Mesocarp.

The protein resides in the plastid. It is found in the chloroplast. It carries out the reaction a (3R)-hydroxyacyl-[ACP] + NADP(+) = a 3-oxoacyl-[ACP] + NADPH + H(+). Its pathway is lipid metabolism; fatty acid biosynthesis. This Persea americana (Avocado) protein is 3-oxoacyl-[acyl-carrier-protein] reductase.